Here is a 119-residue protein sequence, read N- to C-terminus: Large ribosomal subunit protein bL19 (119 aa).

It belongs to the bacterial ribosomal protein bL19 family.

In terms of biological role, this protein is located at the 30S-50S ribosomal subunit interface and may play a role in the structure and function of the aminoacyl-tRNA binding site. The protein is Large ribosomal subunit protein bL19 of Sulfurovum sp. (strain NBC37-1).